The chain runs to 254 residues: Protein EFFECTOR OF TRANSCRIPTION 3 (254 aa).

The region spanning arginine 103–glycine 152 is the GIY-YIG domain.

Its subcellular location is the cytoplasm. This chain is Protein EFFECTOR OF TRANSCRIPTION 3, found in Arabidopsis thaliana (Mouse-ear cress).